Consider the following 79-residue polypeptide: Small ribosomal subunit protein bS18c (79 aa).

It belongs to the bacterial ribosomal protein bS18 family. As to quaternary structure, part of the 30S ribosomal subunit.

It localises to the plastid. The protein resides in the chloroplast. The protein is Small ribosomal subunit protein bS18c of Chaetosphaeridium globosum (Charophycean green alga).